The following is a 166-amino-acid chain: Interferon gamma (166 aa).

The first 23 residues, 1–23 (MNYTSYILAFQLCVILGSSGCYC), serve as a signal peptide directing secretion. Position 24 is a pyrrolidone carboxylic acid (Gln-24). N-linked (GlcNAc...) asparagine glycosylation is found at Asn-39 and Asn-106.

It belongs to the type II (or gamma) interferon family. As to quaternary structure, homodimer. Interacts with IFNGR1 (via extracellular domain); this interaction promotes IFNGR1 dimerization. In terms of tissue distribution, released primarily from activated T lymphocytes.

The protein resides in the secreted. Its function is as follows. Type II interferon produced by immune cells such as T-cells and NK cells that plays crucial roles in antimicrobial, antiviral, and antitumor responses by activating effector immune cells and enhancing antigen presentation. Primarily signals through the JAK-STAT pathway after interaction with its receptor IFNGR1 to affect gene regulation. Upon IFNG binding, IFNGR1 intracellular domain opens out to allow association of downstream signaling components JAK2, JAK1 and STAT1, leading to STAT1 activation, nuclear translocation and transcription of IFNG-regulated genes. Many of the induced genes are transcription factors such as IRF1 that are able to further drive regulation of a next wave of transcription. Plays a role in class I antigen presentation pathway by inducing a replacement of catalytic proteasome subunits with immunoproteasome subunits. In turn, increases the quantity, quality, and repertoire of peptides for class I MHC loading. Increases the efficiency of peptide generation also by inducing the expression of activator PA28 that associates with the proteasome and alters its proteolytic cleavage preference. Up-regulates as well MHC II complexes on the cell surface by promoting expression of several key molecules such as cathepsins B/CTSB, H/CTSH, and L/CTSL. Participates in the regulation of hematopoietic stem cells during development and under homeostatic conditions by affecting their development, quiescence, and differentiation. The protein is Interferon gamma (IFNG) of Camelus bactrianus (Bactrian camel).